Consider the following 210-residue polypeptide: Thymidylate kinase (210 aa).

11 to 18 (GVDGAGKT) is an ATP binding site.

It belongs to the thymidylate kinase family.

The enzyme catalyses dTMP + ATP = dTDP + ADP. Functionally, phosphorylation of dTMP to form dTDP in both de novo and salvage pathways of dTTP synthesis. The polypeptide is Thymidylate kinase (tmk) (Mycoplasma pneumoniae (strain ATCC 29342 / M129 / Subtype 1) (Mycoplasmoides pneumoniae)).